We begin with the raw amino-acid sequence, 276 residues long: Lipoyl synthase (276 aa).

[4Fe-4S] cluster is bound by residues Cys27, Cys32, Cys38, Cys53, Cys57, Cys60, and Ser266. One can recognise a Radical SAM core domain in the interval 39–255 (FGNKTATFMI…EEIGYEMGFK (217 aa)).

This sequence belongs to the radical SAM superfamily. Lipoyl synthase family. Requires [4Fe-4S] cluster as cofactor.

It is found in the cytoplasm. It catalyses the reaction [[Fe-S] cluster scaffold protein carrying a second [4Fe-4S](2+) cluster] + N(6)-octanoyl-L-lysyl-[protein] + 2 oxidized [2Fe-2S]-[ferredoxin] + 2 S-adenosyl-L-methionine + 4 H(+) = [[Fe-S] cluster scaffold protein] + N(6)-[(R)-dihydrolipoyl]-L-lysyl-[protein] + 4 Fe(3+) + 2 hydrogen sulfide + 2 5'-deoxyadenosine + 2 L-methionine + 2 reduced [2Fe-2S]-[ferredoxin]. It participates in protein modification; protein lipoylation via endogenous pathway; protein N(6)-(lipoyl)lysine from octanoyl-[acyl-carrier-protein]: step 2/2. In terms of biological role, catalyzes the radical-mediated insertion of two sulfur atoms into the C-6 and C-8 positions of the octanoyl moiety bound to the lipoyl domains of lipoate-dependent enzymes, thereby converting the octanoylated domains into lipoylated derivatives. This chain is Lipoyl synthase, found in Aquifex aeolicus (strain VF5).